Reading from the N-terminus, the 254-residue chain is K88 minor fimbrial subunit FaeI (254 aa).

Residues 1–20 form the signal peptide; it reads MKKVTLFLFVVSLLPSTVLA.

Belongs to the fimbrial K88 protein family.

The protein resides in the fimbrium. Functionally, K88 minor fimbrial subunit, plays an essential role in the biogenesis of the K88 fimbriae. Fimbriae (also called pili), are polar filaments radiating from the surface of the bacterium to a length of 0.5-1.5 micrometers and numbering 100-300 per cell. They enable bacteria to colonize the epithelium of specific host organs. In Escherichia coli, this protein is K88 minor fimbrial subunit FaeI (faeI).